A 514-amino-acid polypeptide reads, in one-letter code: ATP synthase subunit alpha 2 (514 aa).

An ATP-binding site is contributed by 170–177; that stretch reads GDRQTGKT.

Belongs to the ATPase alpha/beta chains family. In terms of assembly, F-type ATPases have 2 components, CF(1) - the catalytic core - and CF(0) - the membrane proton channel. CF(1) has five subunits: alpha(3), beta(3), gamma(1), delta(1), epsilon(1). CF(0) has three main subunits: a(1), b(2) and c(9-12). The alpha and beta chains form an alternating ring which encloses part of the gamma chain. CF(1) is attached to CF(0) by a central stalk formed by the gamma and epsilon chains, while a peripheral stalk is formed by the delta and b chains.

The protein resides in the cell inner membrane. It carries out the reaction ATP + H2O + 4 H(+)(in) = ADP + phosphate + 5 H(+)(out). In terms of biological role, produces ATP from ADP in the presence of a proton gradient across the membrane. The alpha chain is a regulatory subunit. The sequence is that of ATP synthase subunit alpha 2 from Hahella chejuensis (strain KCTC 2396).